The primary structure comprises 158 residues: NAD(P)H-quinone oxidoreductase subunit J, chloroplastic (158 aa).

Belongs to the complex I 30 kDa subunit family. NDH is composed of at least 16 different subunits, 5 of which are encoded in the nucleus.

The protein localises to the plastid. The protein resides in the chloroplast thylakoid membrane. The catalysed reaction is a plastoquinone + NADH + (n+1) H(+)(in) = a plastoquinol + NAD(+) + n H(+)(out). It carries out the reaction a plastoquinone + NADPH + (n+1) H(+)(in) = a plastoquinol + NADP(+) + n H(+)(out). Its function is as follows. NDH shuttles electrons from NAD(P)H:plastoquinone, via FMN and iron-sulfur (Fe-S) centers, to quinones in the photosynthetic chain and possibly in a chloroplast respiratory chain. The immediate electron acceptor for the enzyme in this species is believed to be plastoquinone. Couples the redox reaction to proton translocation, and thus conserves the redox energy in a proton gradient. The sequence is that of NAD(P)H-quinone oxidoreductase subunit J, chloroplastic from Solanum tuberosum (Potato).